The primary structure comprises 241 residues: Small ribosomal subunit protein uS2 (241 aa).

This sequence belongs to the universal ribosomal protein uS2 family.

The chain is Small ribosomal subunit protein uS2 from Klebsiella pneumoniae subsp. pneumoniae (strain ATCC 700721 / MGH 78578).